The sequence spans 1009 residues: Glutamate receptor ionotropic, delta-1 (1009 aa).

The N-terminal stretch at 1–20 is a signal peptide; that stretch reads MEALTLWLLPWICQCVSVRA. Residues 21–436 form an interaction with CBLN1 region; sequence DSIIHIGAIF…ERPMGSRLQG (416 aa). At 21–562 the chain is on the extracellular side; that stretch reads DSIIHIGAIF…SIFSLFAPFD (542 aa). Cystine bridges form between Cys-80-Cys-351, Cys-96-Cys-128, and Cys-294-Cys-306. Asn-131 and Asn-200 each carry an N-linked (GlcNAc...) asparagine glycan. 2 N-linked (GlcNAc...) asparagine glycosylation sites follow: Asn-422 and Asn-498. Residues Glu-527, Val-530, and Asp-531 each coordinate Ca(2+). The chain crosses the membrane as a helical span at residues 563-583; the sequence is FAVWACIAAAIPVVGVLIFVL. The Cytoplasmic segment spans residues 584 to 637; sequence NRIQAVRAQSAAQPRPSASATLHSAIWIVYGAFVQQGGESSVNSMAMRIVMGSW. Residues 638-658 form a helical membrane-spanning segment; that stretch reads WLFTLIVCSSYTANLAAFLTV. Over 659-830 the chain is Extracellular; that stretch reads SRMDNPIRTF…ADGKSLKLHS (172 aa). The Ca(2+) site is built by Asp-753, Asp-755, and Ser-757. Residues 831–851 traverse the membrane as a helical segment; it reads FAGVFCILAIGLLLACLVAAL. At 852-1009 the chain is on the cytoplasmic side; the sequence is ELWWNSNRCH…ALDTSHGTSI (158 aa). The span at 930–942 shows a compositional bias: polar residues; that stretch reads FLPEQSSHGTSRT. The interval 930–954 is disordered; it reads FLPEQSSHGTSRTLSSGPSSNLPLP. Residues 943-954 are compositionally biased toward low complexity; it reads LSSGPSSNLPLP.

The protein belongs to the glutamate-gated ion channel (TC 1.A.10.1) family. GRID1 subfamily. In terms of assembly, homodimer. Interacts (via extracellular N-terminal domain) with CBLN1 (via C1q domain), and more weakly with CBLN2; the interactions mediate the trans-synaptic adhesion complexes also with neurexins and are required for ligand-gated cation channel activity.

The protein resides in the postsynaptic cell membrane. The catalysed reaction is Ca(2+)(in) = Ca(2+)(out). The enzyme catalyses Na(+)(in) = Na(+)(out). Its function is as follows. Member of the ionotropic glutamate receptor family, which plays a crucial role in synaptic organization and signal transduction in the central nervous system. Although it shares structural features with ionotropic glutamate receptors, does not bind glutamate as a primary ligand. Instead, forms trans-synaptic adhesion complexes with presynaptic neurexins and cerebellins, regulating NMDA and AMPA receptor activity and influencing synaptic plasticity through signal transduction. In the presence of neurexins and cerebellins, forms cation-selective channels that are proposed to be gated by glycine and D-serine. However, recent research disputes this ligand-gated cation channel activity. Cation-selective ion channel can be triggered by GRM1 in dopaminergic neurons. Also acts as a receptor for GABA, modulating inhibitory synaptic plasticity through non-ionotropic mechanisms. The chain is Glutamate receptor ionotropic, delta-1 from Homo sapiens (Human).